The sequence spans 349 residues: PDZ and LIM domain protein 2 (349 aa).

Positions 1–84 (MALTVNVVGP…PLRLQLDRSQ (84 aa)) constitute a PDZ domain. 2 disordered regions span residues 72–95 (SASP…NGEG) and 108–147 (LRTH…PIAL). Polar residues-rich tracts occupy residues 81 to 90 (DRSQTASPGQ) and 108 to 121 (LRTH…QRSA). Ser-124, Ser-127, Ser-129, Ser-134, and Ser-137 each carry phosphoserine. Thr-138 and Thr-142 each carry phosphothreonine. 2 positions are modified to phosphoserine: Ser-143 and Ser-163. Disordered stretches follow at residues 168 to 212 (ATHH…SSLD) and 250 to 272 (ERGG…PTSR). Over residues 176-192 (GQPTSQQAGHSSPSDST) the composition is skewed to polar residues. Residues Ser-199, Ser-204, Ser-205, Ser-209, Ser-210, and Ser-263 each carry the phosphoserine modification. Over residues 199 to 211 (SPGRPSSPRLSSL) the composition is skewed to low complexity. The span at 260–270 (SSLSPKASLPT) shows a compositional bias: polar residues. The LIM zinc-binding domain maps to 281–341 (HTCEKCSVNI…EKHARQRYSM (61 aa)).

In terms of assembly, interacts with alpha-actinins ACTN1 and ACTN4, FLNA and MYH9. Interacts (via LIM zinc-binding domain) with MKRN2. Highly expressed in cornea and lung. Expressed at intermediate level in sclera and combined tissues of the eye irido-corneal angle. Specifically expressed in the corneal epithelial cells but not in other corneal layers.

Its subcellular location is the cytoplasm. The protein resides in the cytoskeleton. Its function is as follows. Probable adapter protein located at the actin cytoskeleton that promotes cell attachment. Necessary for the migratory capacity of epithelial cells. Overexpression enhances cell adhesion to collagen and fibronectin and suppresses anchorage independent growth. May contribute to tumor cell migratory capacity. This Rattus norvegicus (Rat) protein is PDZ and LIM domain protein 2 (Pdlim2).